The sequence spans 1394 residues: Adhesion and penetration protein autotransporter (1394 aa).

The N-terminal stretch at 1–25 is a signal peptide; sequence MKKTVFRLNFLTACISLGIVSQAWA. A Peptidase S6 domain is found at 26–286; sequence GHTYFGIDYQ…QLVRKSYFDE (261 aa). Ser243 is a catalytic residue. 2 disordered regions span residues 848 to 870 and 995 to 1027; these read AYSASSNNTPRRRSLETETTPTS and TLEAKQVEPTAKTQTGEPKVRSRRAARAAFPDT. Residues 1140 to 1394 form the Autotransporter domain; that stretch reads VDQAQSAVWT…NVGVKLGYRW (255 aa).

The protein localises to the periplasm. It is found in the secreted. Its subcellular location is the cell surface. It localises to the cell outer membrane. Probable protease; promotes adherence and invasion by directly binding to a host cell structure. The sequence is that of Adhesion and penetration protein autotransporter (hap) from Haemophilus influenzae.